Consider the following 83-residue polypeptide: Cytochrome c6 (83 aa).

C14, C17, and H18 together coordinate heme c. The residue at position 24 (K24) is an N6-methyllysine; partial. Heme c is bound at residue M59.

It belongs to the cytochrome c family. PetJ subfamily. As to quaternary structure, monomer. Binds 1 heme c group covalently per subunit. In terms of processing, 50% of the molecules were found to be monomethylated at Lys-24.

The protein localises to the plastid. The protein resides in the chloroplast thylakoid lumen. Functions as an electron carrier between membrane-bound cytochrome b6-f and photosystem I in oxygenic photosynthesis. The polypeptide is Cytochrome c6 (petJ) (Diacronema lutheri (Unicellular marine alga)).